Reading from the N-terminus, the 109-residue chain is APNTNFVSSACNTQKIPSGNPFFNNLGAMLADLKQNTAFSGYDYKTSRAGSGGAPTAYGRAICKSSISQSDCTACLSNLVGRIWGICSNAIGARVQLTDCFIQYEQHSF.

Residues 4–109 form the Gnk2-homologous domain; sequence TNFVSSACNT…CFIQYEQHSF (106 aa). 3 cysteine pairs are disulfide-bonded: Cys-11–Cys-87, Cys-63–Cys-72, and Cys-75–Cys-100. Asn-12 contacts alpha-D-mannopyranose. Alpha-D-mannopyranose contacts are provided by Arg-94 and Glu-105.

In terms of biological role, exerts antifungal activity through its carbohydrate-binding specificity. The polypeptide is Antifungal protein ginkbilobin-like protein (Picea abies (Norway spruce)).